Consider the following 439-residue polypeptide: Putrescine transporter PotE (439 aa).

12 consecutive transmembrane segments (helical) span residues 10–30, 40–60, 91–111, 114–134, 152–172, 186–206, 225–245, 276–296, 321–341, 354–374, 387–407, and 410–430; these read GVVQ…IIML, ISII…WAFA, TYGV…VGYG, LLGA…VLWI, ITVW…WFWF, APFF…FLGL, IAVL…TNVI, VIMA…QFTI, APVQ…LMTI, NLAV…LVII, VANF…YSSG, and AMLY…LVSP.

The protein belongs to the amino acid-polyamine-organocation (APC) superfamily. Basic amino acid/polyamine antiporter (APA) (TC 2.A.3.2) family.

It localises to the cell inner membrane. It carries out the reaction putrescine(in) + H(+)(in) = putrescine(out) + H(+)(out). It catalyses the reaction putrescine(in) + L-ornithine(out) = putrescine(out) + L-ornithine(in). Catalyzes both the uptake and excretion of putrescine. The uptake of putrescine is dependent on the membrane potential and the excretion involves putrescine-ornithine antiporter activity. This is Putrescine transporter PotE from Escherichia coli O6:H1 (strain CFT073 / ATCC 700928 / UPEC).